A 437-amino-acid chain; its full sequence is MAAATGGLTPEQIIAVDGAHLWHPYSSIGREAVSPVVAVAAHGAWLTLIRDGQPIEVLDAMSSWWTAIHGHGHPALDQALTTQLRVMNHVMFGGLTHEPAARLAKLLVDITPAGLDTVFFSDSGSVSVEVAAKMALQYWRGRGLPGKRRLMTWRGGYHGDTFLAMSICDPHGGMHSLWTDVLAAQVFAPQVPRDYDPAYSAAFEAQLAQHAGELAAVVVEPVVQGAGGMRFHDPRYLHDLRDICRRYEVLLIFDEIATGFGRTGALFAADHAGVSPDIMCVGKALTGGYLSLAATLCTADVAHTISAGAAGALMHGPTFMANPLACAVSVASVELLLGQDWRTRITELAAGLTAGLDTARALPAVTDVRVCGAIGVIECDRPVDLAVATPAALDRGVWLRPFRNLVYAMPPYICTPAEITQITSAMVEVARLVGSLP.

Residue Trp-64 participates in substrate binding. Pyridoxal 5'-phosphate is bound at residue Gly-124–Ser-125. A substrate-binding site is contributed by Tyr-157. Pyridoxal 5'-phosphate is bound at residue Asp-254. Positions 283 and 316 each coordinate substrate. At Lys-283 the chain carries N6-(pyridoxal phosphate)lysine. Pyridoxal 5'-phosphate is bound at residue Pro-317 to Thr-318. Substrate is bound at residue Arg-400.

This sequence belongs to the class-III pyridoxal-phosphate-dependent aminotransferase family. BioA subfamily. As to quaternary structure, homodimer. The cofactor is pyridoxal 5'-phosphate.

It is found in the cytoplasm. The enzyme catalyses (8S)-8-amino-7-oxononanoate + S-adenosyl-L-methionine = S-adenosyl-4-methylsulfanyl-2-oxobutanoate + (7R,8S)-7,8-diammoniononanoate. Its pathway is cofactor biosynthesis; biotin biosynthesis; 7,8-diaminononanoate from 8-amino-7-oxononanoate (SAM route): step 1/1. In terms of biological role, catalyzes the transfer of the alpha-amino group from S-adenosyl-L-methionine (SAM) to 7-keto-8-aminopelargonic acid (KAPA) to form 7,8-diaminopelargonic acid (DAPA). It is the only aminotransferase known to utilize SAM as an amino donor. The chain is Adenosylmethionine-8-amino-7-oxononanoate aminotransferase (bioA) from Mycobacterium tuberculosis (strain CDC 1551 / Oshkosh).